We begin with the raw amino-acid sequence, 393 residues long: G protein-activated inward rectifier potassium channel 3 (393 aa).

A disordered region spans residues 1–23 (MAQENAAFSPGSEEPPRRRGRQR). Over 1-57 (MAQENAAFSPGSEEPPRRRGRQRYVEKDGRCNVQQGNVRETYRYLTDLFTTLVDLQW) the chain is Cytoplasmic. The chain crosses the membrane as a helical span at residues 58 to 82 (RLSLLFFVLAYALTWLFFGAIWWLI). The Extracellular segment spans residues 83 to 106 (AYGRGDLEHLEDTAWTPCVNNLNG). The segment at residues 107–118 (FVAAFLFSIETE) is an intramembrane region (helical; Pore-forming). The segment at residues 119–125 (TTIGYGH) is an intramembrane region (pore-forming). The Selectivity filter motif lies at 120–125 (TIGYGH). At 126–134 (RVITDQCPE) the chain is on the extracellular side. Residues 135–156 (GIVLLLLQAILGSMVNAFMVGC) form a helical membrane-spanning segment. Residues 157–393 (MFVKISQPNK…LPPPESESKV (237 aa)) are Cytoplasmic-facing. A disordered region spans residues 360–393 (KVEEEGAGEGAGAGDGADKEQNGCLPPPESESKV). Positions 384 to 393 (LPPPESESKV) are enriched in pro residues. Residues 390 to 393 (ESKV) carry the PDZ-binding motif.

The protein belongs to the inward rectifier-type potassium channel (TC 1.A.2.1) family. KCNJ9 subfamily. As to quaternary structure, associates with KCNJ3/GIRK1 to form a G-protein-activated heteromultimer pore-forming unit. Interacts (via PDZ-binding motif) with SNX27 (via PDZ domain); the interaction is required when endocytosed to prevent degradation in lysosomes and promote recycling to the plasma membrane.

It localises to the membrane. It catalyses the reaction K(+)(in) = K(+)(out). Its function is as follows. This receptor is controlled by G proteins. Inward rectifier potassium channels are characterized by a greater tendency to allow potassium to flow into the cell rather than out of it. Their voltage dependence is regulated by the concentration of extracellular potassium; as external potassium is raised, the voltage range of the channel opening shifts to more positive voltages. The inward rectification is mainly due to the blockage of outward current by internal magnesium. Unable to produce channel activity when expressed alone but forms a functional channel in association with KCNJ3/GIRK1. The protein is G protein-activated inward rectifier potassium channel 3 (Kcnj9) of Rattus norvegicus (Rat).